Reading from the N-terminus, the 286-residue chain is 3-hydroxyanthranilate 3,4-dioxygenase (286 aa).

Residues 1 to 160 (MERPVRVKAW…SEQYRTGKPN (160 aa)) form a domain A (catalytic) region. Arg43 provides a ligand contact to O2. 3 residues coordinate Fe cation: His47, Glu53, and His91. Glu53 is a substrate binding site. The substrate site is built by Arg95 and Glu105. The tract at residues 161-177 (PDQLLKEPPFPLSTRSV) is linker. The tract at residues 178-286 (MEPMCLEAWL…QDPACKKSLG (109 aa)) is domain B.

This sequence belongs to the 3-HAO family. Monomer. The cofactor is Fe(2+).

The protein resides in the cytoplasm. It localises to the cytosol. The catalysed reaction is 3-hydroxyanthranilate + O2 = (2Z,4Z)-2-amino-3-carboxymuconate 6-semialdehyde. The protein operates within cofactor biosynthesis; NAD(+) biosynthesis; quinolinate from L-kynurenine: step 3/3. Its function is as follows. Catalyzes the oxidative ring opening of 3-hydroxyanthranilate to 2-amino-3-carboxymuconate semialdehyde, which spontaneously cyclizes to quinolinate. The polypeptide is 3-hydroxyanthranilate 3,4-dioxygenase (Bos taurus (Bovine)).